The chain runs to 111 residues: Cell division protein FtsL (111 aa).

The Cytoplasmic portion of the chain corresponds to 1–26; it reads MAQARTEFSKVAAPRKLEEMYAQRGD. The chain crosses the membrane as a helical span at residues 27 to 47; that stretch reads LFPYLLAVLVLLTLVSVFHVW. The Periplasmic portion of the chain corresponds to 48–111; the sequence is SRVRVVDLNL…PTDQQVVVVK (64 aa). Residues 51–85 are a coiled coil; sequence RVVDLNLEVAEVARQLKVAQEEQNRLKLEVASLKT.

The protein belongs to the FtsL family.

The protein localises to the cell inner membrane. In terms of biological role, essential cell division protein. This is Cell division protein FtsL from Geobacter sulfurreducens (strain ATCC 51573 / DSM 12127 / PCA).